A 197-amino-acid chain; its full sequence is Superoxide dismutase [Fe] (197 aa).

Positions 26, 75, 157, and 161 each coordinate Fe cation.

The protein belongs to the iron/manganese superoxide dismutase family. As to quaternary structure, homotetramer. Fe cation serves as cofactor.

It catalyses the reaction 2 superoxide + 2 H(+) = H2O2 + O2. Its function is as follows. Destroys superoxide anion radicals which are normally produced within the cells and which are toxic to biological systems. This Cupriavidus metallidurans (strain ATCC 43123 / DSM 2839 / NBRC 102507 / CH34) (Ralstonia metallidurans) protein is Superoxide dismutase [Fe].